The primary structure comprises 115 residues: NAD(P)H-quinone oxidoreductase subunit M (115 aa).

It belongs to the complex I NdhM subunit family. In terms of assembly, NDH-1 can be composed of about 15 different subunits; different subcomplexes with different compositions have been identified which probably have different functions.

It is found in the cellular thylakoid membrane. It carries out the reaction a plastoquinone + NADH + (n+1) H(+)(in) = a plastoquinol + NAD(+) + n H(+)(out). It catalyses the reaction a plastoquinone + NADPH + (n+1) H(+)(in) = a plastoquinol + NADP(+) + n H(+)(out). In terms of biological role, NDH-1 shuttles electrons from an unknown electron donor, via FMN and iron-sulfur (Fe-S) centers, to quinones in the respiratory and/or the photosynthetic chain. The immediate electron acceptor for the enzyme in this species is believed to be plastoquinone. Couples the redox reaction to proton translocation, and thus conserves the redox energy in a proton gradient. Cyanobacterial NDH-1 also plays a role in inorganic carbon-concentration. The chain is NAD(P)H-quinone oxidoreductase subunit M from Prochlorococcus marinus (strain MIT 9301).